Here is a 993-residue protein sequence, read N- to C-terminus: DNA double-strand break repair Rad50 ATPase (993 aa).

Residues Arg-12, 32 to 38 (NGSGKSS), and Gln-133 contribute to the ATP site. Coiled coils occupy residues 192–222 (LENL…LEKL) and 402–493 (EELK…LEKT). One can recognise a Zinc-hook domain in the interval 452–556 (ENELKEKYED…KLNEIDSFKL (105 aa)). Residues Cys-497 and Cys-500 each contribute to the Zn(2+) site. Coiled coils occupy residues 570–612 (KVEE…LEND), 646–677 (DSSK…EINL), and 702–731 (ETEK…VLKN).

Belongs to the SMC family. RAD50 subfamily. In terms of assembly, homodimer. Forms a heterotetramer composed of two Mre11 subunits and two Rad50 subunits. It depends on Zn(2+) as a cofactor.

Its function is as follows. Part of the Rad50/Mre11 complex, which is involved in the early steps of DNA double-strand break (DSB) repair. The complex may facilitate opening of the processed DNA ends to aid in the recruitment of HerA and NurA. Rad50 controls the balance between DNA end bridging and DNA resection via ATP-dependent structural rearrangements of the Rad50/Mre11 complex. The sequence is that of DNA double-strand break repair Rad50 ATPase from Methanococcus maripaludis (strain DSM 14266 / JCM 13030 / NBRC 101832 / S2 / LL).